The primary structure comprises 150 residues: Transcriptional regulator MraZ (150 aa).

SpoVT-AbrB domains are found at residues 5-51 (VANL…PQPE) and 80-123 (ATEC…DEDT).

The protein belongs to the MraZ family. In terms of assembly, forms oligomers.

The protein localises to the cytoplasm. The protein resides in the nucleoid. In Thioalkalivibrio sulfidiphilus (strain HL-EbGR7), this protein is Transcriptional regulator MraZ.